Here is a 215-residue protein sequence, read N- to C-terminus: Redox-sensing transcriptional repressor Rex (215 aa).

A DNA-binding region (H-T-H motif) is located at residues 18 to 57 (LYHRYLKYLDESGKERVSSAELSEAVKVDSATIRRDFSYF). Residue 92–97 (GVGNLG) participates in NAD(+) binding.

It belongs to the transcriptional regulatory Rex family. As to quaternary structure, homodimer.

It is found in the cytoplasm. Modulates transcription in response to changes in cellular NADH/NAD(+) redox state. In Listeria innocua serovar 6a (strain ATCC BAA-680 / CLIP 11262), this protein is Redox-sensing transcriptional repressor Rex.